The sequence spans 354 residues: Rhodopsin (354 aa).

Residues 1-36 (MNGTEGPNFYIPMSNKTGVVRSPFEYPQYYLAEPWQ) are Extracellular-facing. Residues Asn2 and Asn15 are each glycosylated (N-linked (GlcNAc...) asparagine). Residues 37–61 (YSILCAYMFLLILLGFPINFMTLYV) form a helical membrane-spanning segment. At 62–73 (TIQHKKLRTPLN) the chain is on the cytoplasmic side. Residues 74–96 (YILLNLAFANHFMVLCGFTVTMY) traverse the membrane as a helical segment. Over 97-110 (SSMNGYFILGATGC) the chain is Extracellular. A disulfide bridge links Cys110 with Cys187. Residues 111–133 (YVEGFFATLGGEIALWSLVVLAI) form a helical membrane-spanning segment. Positions 134–136 (ERY) match the 'Ionic lock' involved in activated form stabilization motif. Residues 134-152 (ERYVVVCKPMSNFRFSENH) are Cytoplasmic-facing. The chain crosses the membrane as a helical span at residues 153 to 173 (AVMGVAFTWIMALSCAVPPLL). Over 174 to 202 (GWSRYIPEGMQCSCGVDYYTLKPEVNNES) the chain is Extracellular. The chain crosses the membrane as a helical span at residues 203–224 (FVIYMFVVHFTIPLIIIFFCYG). Topologically, residues 225 to 252 (RLVCTVKEAAAQQQESATTQKAEKEVTR) are cytoplasmic. A helical transmembrane segment spans residues 253-274 (MVIIMVVFFLICWVPYASVAFF). At 275–286 (IFSNQGSEFGPI) the chain is on the extracellular side. The chain crosses the membrane as a helical span at residues 287–308 (FMTVPAFFAKSSSIYNPVIYIM). N6-(retinylidene)lysine is present on Lys296. The Cytoplasmic portion of the chain corresponds to 309-354 (LNKQFRNCMITTLCCGKNPFGEDDASSAATSKTEASSVSSSQVSPA). Residues Cys322 and Cys323 are each lipidated (S-palmitoyl cysteine). The disordered stretch occupies residues 331–354 (DDASSAATSKTEASSVSSSQVSPA). Residues 334-354 (SSAATSKTEASSVSSSQVSPA) show a composition bias toward low complexity.

The protein belongs to the G-protein coupled receptor 1 family. Opsin subfamily. In terms of processing, contains one covalently linked retinal chromophore. Upon light absorption, the covalently bound 11-cis-retinal is converted to all-trans-retinal. After hydrolysis of the Schiff base and release of the covalently bound all-trans-retinal, active rhodopsin is regenerated by binding of a fresh molecule of 11-cis-retinal.

It is found in the membrane. The protein resides in the cell projection. The protein localises to the cilium. Its subcellular location is the photoreceptor outer segment. Functionally, photoreceptor required for image-forming vision at low light intensity. Required for photoreceptor cell viability after birth. Light-induced isomerization of 11-cis to all-trans retinal triggers a conformational change that activates signaling via G-proteins. Subsequent receptor phosphorylation mediates displacement of the bound G-protein alpha subunit by arrestin and terminates signaling. The chain is Rhodopsin (RHO) from Bufo bufo (European toad).